A 431-amino-acid polypeptide reads, in one-letter code: Trigger factor (431 aa).

One can recognise a PPIase FKBP-type domain in the interval 161–246 (DDRVTIDFVG…LKKVENIVLP (86 aa)).

It belongs to the FKBP-type PPIase family. Tig subfamily.

The protein localises to the cytoplasm. The catalysed reaction is [protein]-peptidylproline (omega=180) = [protein]-peptidylproline (omega=0). Involved in protein export. Acts as a chaperone by maintaining the newly synthesized protein in an open conformation. Functions as a peptidyl-prolyl cis-trans isomerase. In Glaesserella parasuis serovar 5 (strain SH0165) (Haemophilus parasuis), this protein is Trigger factor.